A 797-amino-acid chain; its full sequence is MIAFSLTMELSLPVFGVTQANKEEWDNIWKNFQQFPNVSRTLGLLRRFFLRNDLGFLSAVVILKQYVENLPTTKQKLNLIECTQGLKFLIRSLYEKIKDQCDVKSSIREIFYDCKARLLLLLEEGCGCGACCATSAALSKVGHLGRPPKLTPHKPHCSAQSALTCVHNHIILGMNPGMSEWMVLEIMFLPSDFYDFNEHKNEISLVATCINCCWLYFMLQQYMSSDLLAIEEALNKTYLALHPNDKASYSNILKFLTSNSHREHVTQKVNVKAFMQSSLYKIIKDTEKNPSPKTKMLMISILGSRGIGMDLFCSQSVLKAPLIDHKLSPVSEYEDFDEDEVELCISDDEVDSEDGNLCVLDDESESVNSVALRQVLTVDKQANEKEYKKIIDKSDDRDDRDKDEYELENEEYNRDEEEDEGEDEEDEKDEKEEGEDEGDDGEDEGEDEGEDEGDEGDEGDEGEDEGEDEDDEEDEGEDEGDEGDEGEDEGDEGDEGEDEGDEGDEGKDEGDEGDEGKDEGDEGDEGDEGDEGEDEWEDEGDEGEDEGDEGEDEGDEGEDEGEDEGDEGEDEGEDEGDEGEDEGEDEGDEGEDEGEDEGDEGEDEGEDEGDEGDEGEDEGDEGEDEGDEGEDEGDEGEDEGDEGEDEGDEGEDEGDEGEDEGDEGDEGEDEGDEGEDEGDEGEDEGDEGDEGDEGDEGDEGEDEGEDEGEDEGDEGTKDKEGNANKVVQNPFDYYNWLQKSTLSIVHNKSIHATEHMLEDQLQHSLTASFETHLYIKPFRNTKESQAATNFVYFREQV.

Residues 394-403 show a composition bias toward basic and acidic residues; that stretch reads SDDRDDRDKD. The disordered stretch occupies residues 394–724; the sequence is SDDRDDRDKD…GTKDKEGNAN (331 aa). Residues 404–713 show a composition bias toward acidic residues; it reads EYELENEEYN…GEDEGEDEGD (310 aa).

The protein belongs to the herpesviridae BBRF2 family.

This is an uncharacterized protein from Saimiriine herpesvirus 2 (strain 11) (SaHV-2).